An 843-amino-acid chain; its full sequence is Protein P (843 aa).

The terminal protein domain (TP) stretch occupies residues 1 to 177; it reads MPLSYPHFRK…FCGSPYSWEQ (177 aa). Positions 178-346 are spacer; it reads ELQHGSTSLN…YCLSHIINLL (169 aa). 2 disordered regions span residues 228–259 and 283–314; these read KQGQ…GVEP and EKAN…SVGS. Positions 239–249 are enriched in basic residues; sequence RSGRLRSRVHT. Residues 347–690 form a polymerase/reverse transcriptase domain (RT) region; it reads EDWGPCYEHG…YMNLYPVARQ (344 aa). The Reverse transcriptase domain occupies 357–600; that stretch reads QHYIRTPRTP…YSLHFMGYVI (244 aa). Mg(2+)-binding residues include aspartate 429, aspartate 551, and aspartate 552.

It belongs to the hepadnaviridae P protein family.

The catalysed reaction is DNA(n) + a 2'-deoxyribonucleoside 5'-triphosphate = DNA(n+1) + diphosphate. The enzyme catalyses Endonucleolytic cleavage to 5'-phosphomonoester.. With respect to regulation, activated by host HSP70 and HSP40 in vitro to be able to bind the epsilon loop of the pgRNA. Because deletion of the RNase H region renders the protein partly chaperone-independent, the chaperones may be needed indirectly to relieve occlusion of the RNA-binding site by this domain. Inhibited by several reverse-transcriptase inhibitors: Lamivudine, Adefovir and Entecavir. Its function is as follows. Multifunctional enzyme that converts the viral RNA genome into dsDNA in viral cytoplasmic capsids. This enzyme displays a DNA polymerase activity that can copy either DNA or RNA templates, and a ribonuclease H (RNase H) activity that cleaves the RNA strand of RNA-DNA heteroduplexes in a partially processive 3'- to 5'-endonucleasic mode. Neo-synthesized pregenomic RNA (pgRNA) are encapsidated together with the P protein, and reverse-transcribed inside the nucleocapsid. Initiation of reverse-transcription occurs first by binding the epsilon loop on the pgRNA genome, and is initiated by protein priming, thereby the 5'-end of (-)DNA is covalently linked to P protein. Partial (+)DNA is synthesized from the (-)DNA template and generates the relaxed circular DNA (RC-DNA) genome. After budding and infection, the RC-DNA migrates in the nucleus, and is converted into a plasmid-like covalently closed circular DNA (cccDNA). The activity of P protein does not seem to be necessary for cccDNA generation, and is presumably released from (+)DNA by host nuclear DNA repair machinery. The polypeptide is Protein P (Homo sapiens (Human)).